The primary structure comprises 479 residues: 3-isopropylmalate dehydratase large subunit (479 aa).

Residues Cys-350, Cys-415, and Cys-418 each coordinate [4Fe-4S] cluster.

This sequence belongs to the aconitase/IPM isomerase family. LeuC type 1 subfamily. In terms of assembly, heterodimer of LeuC and LeuD. The cofactor is [4Fe-4S] cluster.

The catalysed reaction is (2R,3S)-3-isopropylmalate = (2S)-2-isopropylmalate. Its pathway is amino-acid biosynthesis; L-leucine biosynthesis; L-leucine from 3-methyl-2-oxobutanoate: step 2/4. Its function is as follows. Catalyzes the isomerization between 2-isopropylmalate and 3-isopropylmalate, via the formation of 2-isopropylmaleate. This is 3-isopropylmalate dehydratase large subunit from Caulobacter vibrioides (strain ATCC 19089 / CIP 103742 / CB 15) (Caulobacter crescentus).